A 594-amino-acid chain; its full sequence is Golgi-associated RAB2 interactor protein 4 (594 aa).

Positions 390 to 525 (AAGLPVSTRQ…SSGSSKRLGR (136 aa)) are disordered. Over residues 396-406 (STRQSKSSLSG) the composition is skewed to polar residues. Basic and acidic residues-rich tracts occupy residues 408–433 (HGRE…DKAL), 442–455 (TGES…DKIA), and 468–477 (ASRDGKKEKG). Positions 510–521 (RSSSTTSSGSSK) are enriched in low complexity.

It belongs to the GARIN family. As to quaternary structure, interacts (via N-terminus) with RAB2B (in GTP-bound form).

It is found in the golgi apparatus. RAB2B effector protein required for the compacted Golgi morphology, probably through interaction with small GTPase RAB2B. This Macaca fascicularis (Crab-eating macaque) protein is Golgi-associated RAB2 interactor protein 4 (GARIN4).